The chain runs to 497 residues: Galactose-1-phosphate uridylyltransferase (497 aa).

Belongs to the galactose-1-phosphate uridylyltransferase type 2 family.

It localises to the cytoplasm. The enzyme catalyses alpha-D-galactose 1-phosphate + UDP-alpha-D-glucose = alpha-D-glucose 1-phosphate + UDP-alpha-D-galactose. The protein operates within carbohydrate metabolism; galactose metabolism. This is Galactose-1-phosphate uridylyltransferase from Enterococcus faecalis (strain ATCC 700802 / V583).